Here is a 336-residue protein sequence, read N- to C-terminus: Phenylalanine--tRNA ligase alpha subunit (336 aa).

Residue E259 participates in Mg(2+) binding.

Belongs to the class-II aminoacyl-tRNA synthetase family. Phe-tRNA synthetase alpha subunit type 1 subfamily. As to quaternary structure, tetramer of two alpha and two beta subunits. Mg(2+) serves as cofactor.

It localises to the cytoplasm. The enzyme catalyses tRNA(Phe) + L-phenylalanine + ATP = L-phenylalanyl-tRNA(Phe) + AMP + diphosphate + H(+). The chain is Phenylalanine--tRNA ligase alpha subunit from Tropheryma whipplei (strain Twist) (Whipple's bacillus).